Reading from the N-terminus, the 199-residue chain is MYEGIVQDLIDELGRLPGIGPKSAQRIAFHLLAADPVDVRRLATALTEVKEKVQFCRSCFNVAQSELCRICSDPRRDPSSICVVEEPKDVVAIERTREFRGRYHVLGGAINPIGGVGPDDLHIRELVARLADGTVTELILATDPNTEGEVTASYLARQIAPMGLKVTRLASGLPMGGDLEWADEVTLGRAFEGRRVVSA.

A C4-type zinc finger spans residues 56–71; that stretch reads CRSCFNVAQSELCRIC. A Toprim domain is found at 79–174; the sequence is SSICVVEEPK…KVTRLASGLP (96 aa).

Belongs to the RecR family.

Its function is as follows. May play a role in DNA repair. It seems to be involved in an RecBC-independent recombinational process of DNA repair. It may act with RecF and RecO. The polypeptide is Recombination protein RecR (Frankia casuarinae (strain DSM 45818 / CECT 9043 / HFP020203 / CcI3)).